The sequence spans 128 residues: Sulfurtransferase TusD (128 aa).

Residue C78 is the Cysteine persulfide intermediate of the active site.

It belongs to the DsrE/TusD family. As to quaternary structure, heterohexamer, formed by a dimer of trimers. The hexameric TusBCD complex contains 2 copies each of TusB, TusC and TusD. The TusBCD complex interacts with TusE.

The protein localises to the cytoplasm. Its function is as follows. Part of a sulfur-relay system required for 2-thiolation of 5-methylaminomethyl-2-thiouridine (mnm(5)s(2)U) at tRNA wobble positions. Accepts sulfur from TusA and transfers it in turn to TusE. The chain is Sulfurtransferase TusD from Klebsiella pneumoniae (strain 342).